The primary structure comprises 426 residues: Glutamate-1-semialdehyde 2,1-aminomutase (426 aa).

Lysine 265 is modified (N6-(pyridoxal phosphate)lysine).

Belongs to the class-III pyridoxal-phosphate-dependent aminotransferase family. HemL subfamily. As to quaternary structure, homodimer. Pyridoxal 5'-phosphate serves as cofactor.

It localises to the cytoplasm. It carries out the reaction (S)-4-amino-5-oxopentanoate = 5-aminolevulinate. Its pathway is porphyrin-containing compound metabolism; protoporphyrin-IX biosynthesis; 5-aminolevulinate from L-glutamyl-tRNA(Glu): step 2/2. This is Glutamate-1-semialdehyde 2,1-aminomutase from Shigella boydii serotype 4 (strain Sb227).